The sequence spans 470 residues: UDP-N-acetylmuramoylalanine--D-glutamate ligase (470 aa).

An ATP-binding site is contributed by 121–127; it reads GTNGKST.

It belongs to the MurCDEF family.

It is found in the cytoplasm. It carries out the reaction UDP-N-acetyl-alpha-D-muramoyl-L-alanine + D-glutamate + ATP = UDP-N-acetyl-alpha-D-muramoyl-L-alanyl-D-glutamate + ADP + phosphate + H(+). Its pathway is cell wall biogenesis; peptidoglycan biosynthesis. Cell wall formation. Catalyzes the addition of glutamate to the nucleotide precursor UDP-N-acetylmuramoyl-L-alanine (UMA). This is UDP-N-acetylmuramoylalanine--D-glutamate ligase from Rhizobium etli (strain ATCC 51251 / DSM 11541 / JCM 21823 / NBRC 15573 / CFN 42).